The primary structure comprises 248 residues: Regulator of G-protein signaling 7-binding protein A (248 aa).

The interval 1–32 is disordered; it reads MSSAPNGRKNRPRTAGTIFQIGGKAPSRESER. 2 S-palmitoyl cysteine lipidation sites follow: C243 and C244.

It belongs to the RGS7BP/RGS9BP family. Palmitoylated. Undergoes rapid palmitoylation turnover. Palmitoylation regulates the cell membrane and nuclear shuttling and the regulation of GPCR signaling. Upon depalmitoylation, it is targeted from the plasma membrane into the nucleus. GPCR signaling inhibits depalmitoylation and promotes localization to the plasma membrane.

Its subcellular location is the nucleus. It is found in the cytoplasm. The protein resides in the cell membrane. Its function is as follows. Regulator of G protein-coupled receptor (GPCR) signaling. Regulatory subunit of the R7-Gbeta5 complexes that acts by controlling the subcellular location of the R7-Gbeta5 complexes. When palmitoylated, it targets the R7-Gbeta5 complexes to the plasma membrane, leading to inhibit G protein alpha subunits. When it is unpalmitoylated, the R7-Gbeta5 complexes undergo a nuclear/cytoplasmic shuttling. The polypeptide is Regulator of G-protein signaling 7-binding protein A (rgs7bpa) (Danio rerio (Zebrafish)).